Consider the following 363-residue polypeptide: Ethanolamine kinase 1 (363 aa).

It belongs to the choline/ethanolamine kinase family.

The protein localises to the cytoplasm. It catalyses the reaction ethanolamine + ATP = phosphoethanolamine + ADP + H(+). It participates in phospholipid metabolism; phosphatidylethanolamine biosynthesis; phosphatidylethanolamine from ethanolamine: step 1/3. Its function is as follows. Highly specific for ethanolamine phosphorylation. May be a rate-controlling step in phosphatidylethanolamine biosynthesis. The sequence is that of Ethanolamine kinase 1 (Etnk1) from Mus musculus (Mouse).